Here is a 264-residue protein sequence, read N- to C-terminus: Carbohydrate deacetylase (264 aa).

Aspartate 20 acts as the Proton acceptor in catalysis. Residues aspartate 21, histidine 60, and histidine 127 each contribute to the Mg(2+) site. Histidine 215 acts as the Proton donor in catalysis.

It belongs to the YdjC deacetylase family. In terms of assembly, homodimer. Mg(2+) serves as cofactor.

In terms of biological role, probably catalyzes the deacetylation of acetylated carbohydrates an important step in the degradation of oligosaccharides. The chain is Carbohydrate deacetylase from Thermus thermophilus (strain ATCC 27634 / DSM 579 / HB8).